The chain runs to 542 residues: CTP synthase (542 aa).

Positions 1-265 (MTRYVFITGG…DREVLGHFGL (265 aa)) are amidoligase domain. CTP is bound at residue Ser13. Ser13 is a binding site for UTP. ATP-binding positions include 14–19 (SLGKGL) and Asp71. Residues Asp71 and Glu139 each coordinate Mg(2+). CTP is bound by residues 146–148 (DIE), 186–191 (KTKPTQ), and Lys222. Residues 186–191 (KTKPTQ) and Lys222 contribute to the UTP site. Residues 291–541 (SIAIVGKYTG…VGAAIEQSRL (251 aa)) form the Glutamine amidotransferase type-1 domain. Residue Gly353 participates in L-glutamine binding. The Nucleophile; for glutamine hydrolysis role is filled by Cys380. Residues 381–384 (FGMQ), Glu404, and Arg469 each bind L-glutamine. Catalysis depends on residues His514 and Glu516.

Belongs to the CTP synthase family. As to quaternary structure, homotetramer.

It catalyses the reaction UTP + L-glutamine + ATP + H2O = CTP + L-glutamate + ADP + phosphate + 2 H(+). The catalysed reaction is L-glutamine + H2O = L-glutamate + NH4(+). It carries out the reaction UTP + NH4(+) + ATP = CTP + ADP + phosphate + 2 H(+). Its pathway is pyrimidine metabolism; CTP biosynthesis via de novo pathway; CTP from UDP: step 2/2. With respect to regulation, allosterically activated by GTP, when glutamine is the substrate; GTP has no effect on the reaction when ammonia is the substrate. The allosteric effector GTP functions by stabilizing the protein conformation that binds the tetrahedral intermediate(s) formed during glutamine hydrolysis. Inhibited by the product CTP, via allosteric rather than competitive inhibition. Its function is as follows. Catalyzes the ATP-dependent amination of UTP to CTP with either L-glutamine or ammonia as the source of nitrogen. Regulates intracellular CTP levels through interactions with the four ribonucleotide triphosphates. In Methylobacterium radiotolerans (strain ATCC 27329 / DSM 1819 / JCM 2831 / NBRC 15690 / NCIMB 10815 / 0-1), this protein is CTP synthase.